A 230-amino-acid chain; its full sequence is NAD(P)H-hydrate epimerase (230 aa).

One can recognise a YjeF N-terminal domain in the interval 11–223 (YAAADIRAAE…DVGLDLSGAT (213 aa)). Residue 59–63 (NNGGD) coordinates (6S)-NADPHX. Residues asparagine 60 and aspartate 125 each contribute to the K(+) site. Residues 129–137 (GIGTTDSPA) and aspartate 165 each bind (6S)-NADPHX. Residue serine 168 participates in K(+) binding.

This sequence belongs to the NnrE/AIBP family. K(+) is required as a cofactor.

The enzyme catalyses (6R)-NADHX = (6S)-NADHX. It catalyses the reaction (6R)-NADPHX = (6S)-NADPHX. Catalyzes the epimerization of the S- and R-forms of NAD(P)HX, a damaged form of NAD(P)H that is a result of enzymatic or heat-dependent hydration. This is a prerequisite for the S-specific NAD(P)H-hydrate dehydratase to allow the repair of both epimers of NAD(P)HX. The polypeptide is NAD(P)H-hydrate epimerase (Clavibacter michiganensis subsp. michiganensis (strain NCPPB 382)).